The primary structure comprises 132 residues: U11/U12 small nuclear ribonucleoprotein 25 kDa protein (132 aa).

The region spanning 41-132 is the Ubiquitin-like domain; that stretch reads MTVRVCKMDG…VSFIKKLRQK (92 aa).

Component of the U11/U12 snRNPs that are part of the U12-type spliceosome.

It is found in the nucleus. The protein is U11/U12 small nuclear ribonucleoprotein 25 kDa protein (SNRNP25) of Homo sapiens (Human).